We begin with the raw amino-acid sequence, 57 residues long: Large ribosomal subunit protein bL32c (57 aa).

This sequence belongs to the bacterial ribosomal protein bL32 family.

It localises to the plastid. The protein resides in the chloroplast. The sequence is that of Large ribosomal subunit protein bL32c from Nandina domestica (Heavenly bamboo).